The chain runs to 262 residues: Co-chaperone protein DjlA (262 aa).

The Periplasmic segment spans residues 1–6 (MRFWGK). Residues 7 to 30 (FFGFVIGFMFGRFFGALLGLWLGH) traverse the membrane as a helical segment. Residues 31–262 (LYDKRPGGGA…DRVKSERGMR (232 aa)) are Cytoplasmic-facing. The J domain maps to 196 to 262 (DAYHLLGITA…DRVKSERGMR (67 aa)).

In terms of assembly, homodimer.

The protein resides in the cell inner membrane. Functionally, regulatory DnaK co-chaperone. Direct interaction between DnaK and DjlA is needed for the induction of the wcaABCDE operon, involved in the synthesis of a colanic acid polysaccharide capsule, possibly through activation of the RcsB/RcsC phosphotransfer signaling pathway. The colanic acid capsule may help the bacterium survive conditions outside the host. The protein is Co-chaperone protein DjlA of Shewanella oneidensis (strain ATCC 700550 / JCM 31522 / CIP 106686 / LMG 19005 / NCIMB 14063 / MR-1).